Reading from the N-terminus, the 362-residue chain is Type II methyltransferase M.MamI (362 aa).

The protein belongs to the N(4)/N(6)-methyltransferase family.

It catalyses the reaction a 2'-deoxyadenosine in DNA + S-adenosyl-L-methionine = an N(6)-methyl-2'-deoxyadenosine in DNA + S-adenosyl-L-homocysteine + H(+). A gamma subtype methylase that recognizes the double-stranded sequence 5'-GATNNNNATC-3', methylates A-? on both strands, and protects the DNA from cleavage by the MamI endonuclease. The chain is Type II methyltransferase M.MamI from Microbacterium ammoniaphilum.